The primary structure comprises 638 residues: Phosphomethylpyrimidine synthase (638 aa).

Residues asparagine 233, methionine 262, tyrosine 291, histidine 327, serine 347–glycine 349, aspartate 388–arginine 391, and glutamate 427 contribute to the substrate site. Residue histidine 431 participates in Zn(2+) binding. Position 454 (tyrosine 454) interacts with substrate. Histidine 495 is a binding site for Zn(2+). The [4Fe-4S] cluster site is built by cysteine 575, cysteine 578, and cysteine 583.

This sequence belongs to the ThiC family. In terms of assembly, homodimer. It depends on [4Fe-4S] cluster as a cofactor.

The enzyme catalyses 5-amino-1-(5-phospho-beta-D-ribosyl)imidazole + S-adenosyl-L-methionine = 4-amino-2-methyl-5-(phosphooxymethyl)pyrimidine + CO + 5'-deoxyadenosine + formate + L-methionine + 3 H(+). Its pathway is cofactor biosynthesis; thiamine diphosphate biosynthesis. Its function is as follows. Catalyzes the synthesis of the hydroxymethylpyrimidine phosphate (HMP-P) moiety of thiamine from aminoimidazole ribotide (AIR) in a radical S-adenosyl-L-methionine (SAM)-dependent reaction. The sequence is that of Phosphomethylpyrimidine synthase from Saccharophagus degradans (strain 2-40 / ATCC 43961 / DSM 17024).